Reading from the N-terminus, the 258-residue chain is tRNA pseudouridine synthase A (258 aa).

D52 (nucleophile) is an active-site residue. Y110 contributes to the substrate binding site.

Belongs to the tRNA pseudouridine synthase TruA family. As to quaternary structure, homodimer.

It carries out the reaction uridine(38/39/40) in tRNA = pseudouridine(38/39/40) in tRNA. In terms of biological role, formation of pseudouridine at positions 38, 39 and 40 in the anticodon stem and loop of transfer RNAs. This is tRNA pseudouridine synthase A from Francisella tularensis subsp. holarctica (strain FTNF002-00 / FTA).